Consider the following 177-residue polypeptide: Large ribosomal subunit protein uL6 (177 aa).

The protein belongs to the universal ribosomal protein uL6 family. In terms of assembly, part of the 50S ribosomal subunit.

Functionally, this protein binds to the 23S rRNA, and is important in its secondary structure. It is located near the subunit interface in the base of the L7/L12 stalk, and near the tRNA binding site of the peptidyltransferase center. This is Large ribosomal subunit protein uL6 from Methylibium petroleiphilum (strain ATCC BAA-1232 / LMG 22953 / PM1).